The chain runs to 597 residues: Elongation factor 4 (597 aa).

The tr-type G domain maps to 2–184 (DHIRNFSIIA…SLIAKVPPPK (183 aa)). GTP contacts are provided by residues 14-19 (DHGKST) and 131-134 (NKID).

It belongs to the TRAFAC class translation factor GTPase superfamily. Classic translation factor GTPase family. LepA subfamily.

The protein localises to the cell inner membrane. It catalyses the reaction GTP + H2O = GDP + phosphate + H(+). Functionally, required for accurate and efficient protein synthesis under certain stress conditions. May act as a fidelity factor of the translation reaction, by catalyzing a one-codon backward translocation of tRNAs on improperly translocated ribosomes. Back-translocation proceeds from a post-translocation (POST) complex to a pre-translocation (PRE) complex, thus giving elongation factor G a second chance to translocate the tRNAs correctly. Binds to ribosomes in a GTP-dependent manner. The polypeptide is Elongation factor 4 (Burkholderia ambifaria (strain MC40-6)).